The primary structure comprises 213 residues: Membrane-spanning 4-domains subfamily A member 3 (213 aa).

Over 1–26 (MKPEETGGSVYQPLDESRHVQRGVLQ) the chain is Cytoplasmic. A helical transmembrane segment spans residues 27-47 (ALGAIQILNGILILALGIFLV). Topologically, residues 48–58 (CLQHVSHHFRH) are extracellular. Residues 59 to 79 (FFFFTFYTGYPLWGAVFFISS) traverse the membrane as a helical segment. Residues 80-97 (GSLTVAAGRNPTRMLMQN) are Cytoplasmic-facing. A helical membrane pass occupies residues 98–118 (SFGINIASTTIAFVGTVFLSV). Residues 119-148 (HLAFNTQAFKGCQSSPSPDVCISLGSSSDG) are Extracellular-facing. Residues 149–169 (LVSLMLILTLLELSVTISISA) traverse the membrane as a helical segment. Topologically, residues 170–213 (MWCLGNVCGLREAITSPPNSVESGILPEGSDSENLNTQPQASEE) are cytoplasmic. A disordered region spans residues 189–213 (SVESGILPEGSDSENLNTQPQASEE). Polar residues predominate over residues 201-213 (SENLNTQPQASEE).

Belongs to the MS4A family. Interacts with CDKN3. Interacts with CDKN3-CDK2 complexes through its binding to CDKN3; this interaction facilitates dissociation of cyclin A from CDKN3-CDK2 complexes. In terms of tissue distribution, expressed at low levels only in specific immune tissues, such as, spleen, bone marrow and peripheral blood leukocytes.

It is found in the membrane. Hematopoietic modulator for the G1-S cell cycle transition. Modulates the level of phosphorylation of cyclin-dependent kinase 2 (CDK2) through its direct binding to cyclin-dependent kinase inhibitor 3 (CDKN3/KAP). This chain is Membrane-spanning 4-domains subfamily A member 3 (Ms4a3), found in Mus musculus (Mouse).